The sequence spans 265 residues: Type III pantothenate kinase (265 aa).

Position 17–24 (Asp17–Ser24) interacts with ATP. Residue Gly114–Val117 participates in substrate binding. The active-site Proton acceptor is the Asp116. Residue Asp137 participates in K(+) binding. ATP is bound at residue Thr140. Thr192 lines the substrate pocket.

Belongs to the type III pantothenate kinase family. Homodimer. The cofactor is NH4(+). K(+) serves as cofactor.

It localises to the cytoplasm. It catalyses the reaction (R)-pantothenate + ATP = (R)-4'-phosphopantothenate + ADP + H(+). The protein operates within cofactor biosynthesis; coenzyme A biosynthesis; CoA from (R)-pantothenate: step 1/5. In terms of biological role, catalyzes the phosphorylation of pantothenate (Pan), the first step in CoA biosynthesis. This Borrelia hermsii (strain HS1 / DAH) protein is Type III pantothenate kinase.